Consider the following 596-residue polypeptide: MSVKPTLSKPIGGQDASSPAVVMRRLWPYVKPLVWVLVAGVLAMAAVAATEAGIPALLKPLLDHGFGSKGDMTTKLYVPAAVVGLALARAIAQYASGYLLQYVSNRILLDLRIQMFERMIHTGVSFFQRETASTVINAVVFEVNQVLSVLMGVTITLVRDSLTVVFLLGYLFYLNWRLTLIVAILLPCIGWLVGKINRRLRRLNREHQTLTNQLAYIVEETVGGYKVVKVHNGEPYEIGRFNELSRKLRGYSMRMTVSGGLAQPLTQFLASIALAVVLTIAVVQSANDQTTVGGFVAFVTAMLLIISPLKHLMDVNQPLQRGMTAAELIFGLIDEPREPEGGGKPLARASGAIEFSHVSFSYGMSRDGRQTLDDVSFTVAPGEMVALAGPSGSGKTTLVNLLPRFFDPSSGSVRVDGVALPEYSLRDLRNQIAMVSQDVVLFNDTIAANVAYGQAPERDRVEAALRAANLWETVTAMPDGIDTLVGDNGMRLSGGQRQRLAIARAIYKDAPILILDEATSALDSESERHVQAALETLMKGRTTLVIAHRLSTIERADRILVLEGGKIVESGSHRELLEQGGLYAHLHRIQFQQDAG.

A run of 6 helical transmembrane segments spans residues 34–54 (VWVL…EAGI), 80–100 (AAVV…GYLL), 138–158 (AVVF…ITLV), 164–184 (VVFL…IVAI), 263–283 (QPLT…IAVV), and 292–312 (VGGF…LKHL). Residues 38–321 (VAGVLAMAAV…LMDVNQPLQR (284 aa)) form the ABC transmembrane type-1 domain. Residues 353-589 (IEFSHVSFSY…GGLYAHLHRI (237 aa)) form the ABC transporter domain. 389 to 396 (GPSGSGKT) provides a ligand contact to ATP.

This sequence belongs to the ABC transporter superfamily. Lipid exporter (TC 3.A.1.106) family. As to quaternary structure, homodimer.

The protein resides in the cell inner membrane. The catalysed reaction is ATP + H2O + lipid A-core oligosaccharideSide 1 = ADP + phosphate + lipid A-core oligosaccharideSide 2.. Involved in lipopolysaccharide (LPS) biosynthesis. Translocates lipid A-core from the inner to the outer leaflet of the inner membrane. Transmembrane domains (TMD) form a pore in the inner membrane and the ATP-binding domain (NBD) is responsible for energy generation. This is ATP-dependent lipid A-core flippase from Burkholderia mallei (strain ATCC 23344).